The primary structure comprises 20 residues: Cytochrome c oxidase subunit 8B, mitochondrial (20 aa).

Belongs to the cytochrome c oxidase VIII family. As to quaternary structure, component of the cytochrome c oxidase (complex IV, CIV), a multisubunit enzyme composed of 14 subunits. The complex is composed of a catalytic core of 3 subunits MT-CO1, MT-CO2 and MT-CO3, encoded in the mitochondrial DNA, and 11 supernumerary subunits COX4I, COX5A, COX5B, COX6A, COX6B, COX6C, COX7A, COX7B, COX7C, COX8 and NDUFA4, which are encoded in the nuclear genome. The complex exists as a monomer or a dimer and forms supercomplexes (SCs) in the inner mitochondrial membrane with NADH-ubiquinone oxidoreductase (complex I, CI) and ubiquinol-cytochrome c oxidoreductase (cytochrome b-c1 complex, complex III, CIII), resulting in different assemblies (supercomplex SCI(1)III(2)IV(1) and megacomplex MCI(2)III(2)IV(2)).

The protein localises to the mitochondrion inner membrane. Its pathway is energy metabolism; oxidative phosphorylation. Component of the cytochrome c oxidase, the last enzyme in the mitochondrial electron transport chain which drives oxidative phosphorylation. The respiratory chain contains 3 multisubunit complexes succinate dehydrogenase (complex II, CII), ubiquinol-cytochrome c oxidoreductase (cytochrome b-c1 complex, complex III, CIII) and cytochrome c oxidase (complex IV, CIV), that cooperate to transfer electrons derived from NADH and succinate to molecular oxygen, creating an electrochemical gradient over the inner membrane that drives transmembrane transport and the ATP synthase. Cytochrome c oxidase is the component of the respiratory chain that catalyzes the reduction of oxygen to water. Electrons originating from reduced cytochrome c in the intermembrane space (IMS) are transferred via the dinuclear copper A center (CU(A)) of subunit 2 and heme A of subunit 1 to the active site in subunit 1, a binuclear center (BNC) formed by heme A3 and copper B (CU(B)). The BNC reduces molecular oxygen to 2 water molecules using 4 electrons from cytochrome c in the IMS and 4 protons from the mitochondrial matrix. The chain is Cytochrome c oxidase subunit 8B, mitochondrial from Thunnus obesus (Bigeye tuna).